We begin with the raw amino-acid sequence, 344 residues long: Alkyl hydroperoxide reductase Rv2159c (344 aa).

The segment at 49 to 50 is important for interaction with PknI; it reads AG. Cysteine 84 functions as the Cysteine sulfenic acid (-SOH) intermediate in the catalytic mechanism.

Belongs to the AhpD family. Interacts with the serine/threonine-protein kinase PknI. The PknI-Rv2159c interaction is mediated through phosphorylation independent physical interaction.

Interaction with PknI increases the peroxidase activity by several folds. In terms of biological role, involved in protection against oxidative stresses. May play a significant role in maintaining the cellular homeostasis during stress and virulence of M.tuberculosis. In vitro, catalyzes the decomposition of cumene hydroperoxide (CHP) to acetophenone. This is Alkyl hydroperoxide reductase Rv2159c from Mycobacterium tuberculosis (strain ATCC 25618 / H37Rv).